Reading from the N-terminus, the 343-residue chain is Glyceraldehyde-3-phosphate dehydrogenase (343 aa).

NAD(+)-binding positions include 13-14 (TI) and G111. 140 to 142 (SCN) contacts D-glyceraldehyde 3-phosphate. Residue C141 is the Nucleophile of the active site. R169 is a binding site for NAD(+). D-glyceraldehyde 3-phosphate is bound at residue 195–196 (HA). NAD(+) is bound at residue Q303.

The protein belongs to the glyceraldehyde-3-phosphate dehydrogenase family. As to quaternary structure, homotetramer.

Its subcellular location is the cytoplasm. The enzyme catalyses D-glyceraldehyde 3-phosphate + phosphate + NADP(+) = (2R)-3-phospho-glyceroyl phosphate + NADPH + H(+). It carries out the reaction D-glyceraldehyde 3-phosphate + phosphate + NAD(+) = (2R)-3-phospho-glyceroyl phosphate + NADH + H(+). It functions in the pathway carbohydrate degradation; glycolysis; pyruvate from D-glyceraldehyde 3-phosphate: step 1/5. The sequence is that of Glyceraldehyde-3-phosphate dehydrogenase from Sulfolobus acidocaldarius (strain ATCC 33909 / DSM 639 / JCM 8929 / NBRC 15157 / NCIMB 11770).